A 216-amino-acid polypeptide reads, in one-letter code: Ribosomal RNA small subunit methyltransferase G (216 aa).

S-adenosyl-L-methionine-binding positions include Gly83, Met88, 134 to 135 (VE), and Arg149.

Belongs to the methyltransferase superfamily. RNA methyltransferase RsmG family.

Its subcellular location is the cytoplasm. The catalysed reaction is guanosine(527) in 16S rRNA + S-adenosyl-L-methionine = N(7)-methylguanosine(527) in 16S rRNA + S-adenosyl-L-homocysteine. Its function is as follows. Specifically methylates the N7 position of guanine in position 527 of 16S rRNA. In Pseudomonas putida (strain GB-1), this protein is Ribosomal RNA small subunit methyltransferase G.